A 195-amino-acid chain; its full sequence is dITP/XTP pyrophosphatase (195 aa).

9–14 (TGNKGK) provides a ligand contact to substrate. Positions 41 and 70 each coordinate Mg(2+). Catalysis depends on aspartate 70, which acts as the Proton acceptor. Residues serine 71, 155–158 (FGYD), lysine 178, and 183–184 (HR) contribute to the substrate site.

This sequence belongs to the HAM1 NTPase family. In terms of assembly, homodimer. The cofactor is Mg(2+).

The catalysed reaction is XTP + H2O = XMP + diphosphate + H(+). The enzyme catalyses dITP + H2O = dIMP + diphosphate + H(+). It carries out the reaction ITP + H2O = IMP + diphosphate + H(+). In terms of biological role, pyrophosphatase that catalyzes the hydrolysis of nucleoside triphosphates to their monophosphate derivatives, with a high preference for the non-canonical purine nucleotides XTP (xanthosine triphosphate), dITP (deoxyinosine triphosphate) and ITP. Seems to function as a house-cleaning enzyme that removes non-canonical purine nucleotides from the nucleotide pool, thus preventing their incorporation into DNA/RNA and avoiding chromosomal lesions. This Haemophilus influenzae (strain ATCC 51907 / DSM 11121 / KW20 / Rd) protein is dITP/XTP pyrophosphatase.